The sequence spans 257 residues: OCIA domain-containing protein 1 (257 aa).

2 disordered regions span residues 1–20 (MDSPLNDGSHHPPPHAPHPL) and 148–257 (YSDE…SWTD). The OCIA domain maps to 1–110 (MDSPLNDGSH…MRLPNSHLGE (110 aa)). A compositionally biased stretch (polar residues) spans 156–170 (GRSTSLNLDTESRPT). Residues 204-216 (EDLRRRNREEYSK) show a composition bias toward basic and acidic residues.

This sequence belongs to the OCIAD1 family. Interacts with STAT3 and ARF1. Expressed in all cells of the primary lymph gland lobe.

It localises to the endosome. Functionally, maintains stem cell potency. Involved in endocytic pathways that mediate signaling during hematopoiesis. This chain is OCIA domain-containing protein 1 (asrij), found in Drosophila melanogaster (Fruit fly).